The following is a 279-amino-acid chain: Phosphatidylglycerol--prolipoprotein diacylglyceryl transferase (279 aa).

Helical transmembrane passes span 4–24, 44–64, 76–96, and 104–124; these read IGPLAIRWYGVLLTLAIFLGY, VVFWAVVFGVVGARLGYVLTS, LYIWHGGLSFHGAILGGGLTF, and GYPLWPYLDAATPGVALGIVA. Arg-126 lines the a 1,2-diacyl-sn-glycero-3-phospho-(1'-sn-glycerol) pocket. Transmembrane regions (helical) follow at residues 182–202, 206–226, and 245–265; these read LTQVYGAVVGLILLFLSLYWL, PFYGYAFWQFVLWYSVLRSVL, and LGIGLFTATQVVSLPLVLLSL.

This sequence belongs to the Lgt family.

Its subcellular location is the cell inner membrane. The enzyme catalyses L-cysteinyl-[prolipoprotein] + a 1,2-diacyl-sn-glycero-3-phospho-(1'-sn-glycerol) = an S-1,2-diacyl-sn-glyceryl-L-cysteinyl-[prolipoprotein] + sn-glycerol 1-phosphate + H(+). Its pathway is protein modification; lipoprotein biosynthesis (diacylglyceryl transfer). Functionally, catalyzes the transfer of the diacylglyceryl group from phosphatidylglycerol to the sulfhydryl group of the N-terminal cysteine of a prolipoprotein, the first step in the formation of mature lipoproteins. The polypeptide is Phosphatidylglycerol--prolipoprotein diacylglyceryl transferase (Thermus thermophilus (strain ATCC 27634 / DSM 579 / HB8)).